The primary structure comprises 284 residues: Bifunctional protein FolD (284 aa).

NADP(+) is bound by residues 165 to 167 and serine 190; that span reads GRS.

The protein belongs to the tetrahydrofolate dehydrogenase/cyclohydrolase family. In terms of assembly, homodimer.

It catalyses the reaction (6R)-5,10-methylene-5,6,7,8-tetrahydrofolate + NADP(+) = (6R)-5,10-methenyltetrahydrofolate + NADPH. It carries out the reaction (6R)-5,10-methenyltetrahydrofolate + H2O = (6R)-10-formyltetrahydrofolate + H(+). It functions in the pathway one-carbon metabolism; tetrahydrofolate interconversion. Functionally, catalyzes the oxidation of 5,10-methylenetetrahydrofolate to 5,10-methenyltetrahydrofolate and then the hydrolysis of 5,10-methenyltetrahydrofolate to 10-formyltetrahydrofolate. This chain is Bifunctional protein FolD, found in Streptococcus sanguinis (strain SK36).